The chain runs to 312 residues: Olfactory receptor 6C1 (312 aa).

The Extracellular segment spans residues 1-23 (MRNHTEITEFILLGLTDDPNFQV). N-linked (GlcNAc...) asparagine glycosylation occurs at asparagine 3. The chain crosses the membrane as a helical span at residues 24–44 (VIFVFLLITYMLSITGNLTLI). Residues 45 to 52 (TITLLDSH) are Cytoplasmic-facing. A helical transmembrane segment spans residues 53–73 (LQTPMYFFLRNFSILEISFTT). The Extracellular segment spans residues 74 to 97 (VSIPKFLGNIISGDKTISFNNCIV). An intrachain disulfide couples cysteine 95 to cysteine 187. Residues 98 to 118 (QLFFFILLGVTEFYLLAAMSY) form a helical membrane-spanning segment. Over 119-137 (DRYVAICKPLHCLSIMNRR) the chain is Cytoplasmic. The helical transmembrane segment at 138–158 (VCTLLVFTSWLVSFLIIFPAL) threads the bilayer. The Extracellular segment spans residues 159–195 (MLLLKLHYCRSNIIDHFTCDYFPLLQLACSDTKFLEV). Residues 196–215 (MGFSCAAFTLMFTLALIFLS) traverse the membrane as a helical segment. Over 216–235 (YIYIIRTILRIPSTSQRTKA) the chain is Cytoplasmic. Residues 236-256 (FSTCSSHMVVVSISYGSCIFM) form a helical membrane-spanning segment. Over 257 to 269 (YIKPSAKDRVSLS) the chain is Extracellular. Residues 270 to 290 (KGVAILNTSVAPMMNPFIYSL) form a helical membrane-spanning segment. Topologically, residues 291–312 (RNQQVKQAFINMARKTVFFTST) are cytoplasmic.

This sequence belongs to the G-protein coupled receptor 1 family.

The protein localises to the cell membrane. Its function is as follows. Odorant receptor. This is Olfactory receptor 6C1 (OR6C1) from Homo sapiens (Human).